Reading from the N-terminus, the 273-residue chain is Small ribosomal subunit protein eS1 (273 aa).

Belongs to the eukaryotic ribosomal protein eS1 family. As to quaternary structure, component of the small ribosomal subunit. Mature ribosomes consist of a small (40S) and a large (60S) subunit. The 40S subunit contains about 33 different proteins and 1 molecule of RNA (18S). The 60S subunit contains about 49 different proteins and 3 molecules of RNA (25S, 5.8S and 5S).

The protein localises to the cytoplasm. This chain is Small ribosomal subunit protein eS1 (rps3a), found in Dictyostelium discoideum (Social amoeba).